We begin with the raw amino-acid sequence, 764 residues long: 5-methyltetrahydropteroyltriglutamate--homocysteine methyltransferase (764 aa).

Residues arginine 17 to lysine 20 and lysine 117 each bind 5-methyltetrahydropteroyltri-L-glutamate. Residues isoleucine 437 to serine 439 and glutamate 490 each bind L-homocysteine. Residues isoleucine 437–serine 439 and glutamate 490 each bind L-methionine. 5-methyltetrahydropteroyltri-L-glutamate contacts are provided by residues arginine 521–cysteine 522 and tryptophan 567. Aspartate 605 contacts L-homocysteine. Aspartate 605 contributes to the L-methionine binding site. Glutamate 611 contacts 5-methyltetrahydropteroyltri-L-glutamate. Histidine 647, cysteine 649, and glutamate 671 together coordinate Zn(2+). Histidine 701 functions as the Proton donor in the catalytic mechanism. Residue cysteine 733 coordinates Zn(2+).

Belongs to the vitamin-B12 independent methionine synthase family. Requires Zn(2+) as cofactor.

It carries out the reaction 5-methyltetrahydropteroyltri-L-glutamate + L-homocysteine = tetrahydropteroyltri-L-glutamate + L-methionine. It participates in amino-acid biosynthesis; L-methionine biosynthesis via de novo pathway; L-methionine from L-homocysteine (MetE route): step 1/1. Functionally, catalyzes the transfer of a methyl group from 5-methyltetrahydrofolate to homocysteine resulting in methionine formation. This is 5-methyltetrahydropteroyltriglutamate--homocysteine methyltransferase from Blochmanniella pennsylvanica (strain BPEN).